The following is a 175-amino-acid chain: MSVKPLIILPDPVLRQVSKPVERFDDQLRKFASDMFDTMYDAPGIGLAAIQVGEPIRMLVIDLAKEGEPKAPHIFVNPTIVQSSDKRSTYEEGCLSIPDYYAEVERPATVKVNYFDADGKPQSMEADGLMATCLQHEIDHLNGVLFIDHISKLKRDMVIKKFKKLASQRASKKVL.

2 residues coordinate Fe cation: Cys-94 and His-136. The active site involves Glu-137. Residue His-140 coordinates Fe cation.

This sequence belongs to the polypeptide deformylase family. It depends on Fe(2+) as a cofactor.

It carries out the reaction N-terminal N-formyl-L-methionyl-[peptide] + H2O = N-terminal L-methionyl-[peptide] + formate. Its function is as follows. Removes the formyl group from the N-terminal Met of newly synthesized proteins. Requires at least a dipeptide for an efficient rate of reaction. N-terminal L-methionine is a prerequisite for activity but the enzyme has broad specificity at other positions. The chain is Peptide deformylase from Brucella suis biovar 1 (strain 1330).